A 452-amino-acid polypeptide reads, in one-letter code: Trigger factor (452 aa).

Residues 162–247 (GDTVTIDYKG…IHEVKSKQLP (86 aa)) form the PPIase FKBP-type domain. The segment at 427–452 (AKAKLEAKEAEEAEDKEEAEDKKENK) is disordered.

Belongs to the FKBP-type PPIase family. Tig subfamily.

It is found in the cytoplasm. The enzyme catalyses [protein]-peptidylproline (omega=180) = [protein]-peptidylproline (omega=0). Its function is as follows. Involved in protein export. Acts as a chaperone by maintaining the newly synthesized protein in an open conformation. Functions as a peptidyl-prolyl cis-trans isomerase. This is Trigger factor from Lactobacillus helveticus (strain DPC 4571).